Here is a 299-residue protein sequence, read N- to C-terminus: AUGMIN subunit 1 (299 aa).

Ser-2 bears the N-acetylserine mark. Coiled-coil stretches lie at residues 76–96 (RLKA…LESA) and 164–184 (RKAI…EDDV).

It belongs to the HAUS1 family. Part of the augmin complex composed of 8 subunits. The complex acts on microtubules and interacts with gamma-tubulin in spindles and the phragmoplast. Interacts with AUG3.

It is found in the cytoplasm. It localises to the cytoskeleton. The protein localises to the spindle. Its subcellular location is the phragmoplast. Its function is as follows. Involved in microtubules reorganization during spindle and phragmoplast development. The sequence is that of AUGMIN subunit 1 from Arabidopsis thaliana (Mouse-ear cress).